A 304-amino-acid polypeptide reads, in one-letter code: tRNA pseudouridine synthase B (304 aa).

Asp44 functions as the Nucleophile in the catalytic mechanism.

This sequence belongs to the pseudouridine synthase TruB family. Type 1 subfamily.

The catalysed reaction is uridine(55) in tRNA = pseudouridine(55) in tRNA. Functionally, responsible for synthesis of pseudouridine from uracil-55 in the psi GC loop of transfer RNAs. This chain is tRNA pseudouridine synthase B, found in Novosphingobium aromaticivorans (strain ATCC 700278 / DSM 12444 / CCUG 56034 / CIP 105152 / NBRC 16084 / F199).